Here is a 343-residue protein sequence, read N- to C-terminus: Annexin A1 isoform p37 (343 aa).

An Isoglutamyl lysine isopeptide (Gln-Lys) (interchain with K-?) cross-link involves residue Gln19. Tyr21 bears the Phosphotyrosine; by EGFR; in vitro mark. At Ser24 the chain carries Phosphoserine; by PKC; in vitro. 4 Annexin repeats span residues 38-109 (FDPS…ALLK), 110-181 (TPAQ…VLAK), 193-265 (DLAD…ALVK), and 269-340 (SKPA…ALCG).

This sequence belongs to the annexin family. In terms of processing, phosphorylated by protein kinase C and epidermal growth factor receptor/kinase. The N-terminus is blocked.

It is found in the nucleus. The protein localises to the cytoplasm. The protein resides in the cell projection. Its subcellular location is the cilium. It localises to the basolateral cell membrane. Its function is as follows. Calcium/phospholipid-binding protein which promotes membrane fusion and is involved in exocytosis. This protein regulates phospholipase A2 activity. It seems to bind from two to four calcium ions with high affinity. The chain is Annexin A1 isoform p37 (CP37) from Columba livia (Rock dove).